The chain runs to 93 residues: Small ribosomal subunit protein uS19 (93 aa).

The protein belongs to the universal ribosomal protein uS19 family.

Protein S19 forms a complex with S13 that binds strongly to the 16S ribosomal RNA. This chain is Small ribosomal subunit protein uS19, found in Maridesulfovibrio salexigens (strain ATCC 14822 / DSM 2638 / NCIMB 8403 / VKM B-1763) (Desulfovibrio salexigens).